A 199-amino-acid polypeptide reads, in one-letter code: Imidazoleglycerol-phosphate dehydratase (199 aa).

This sequence belongs to the imidazoleglycerol-phosphate dehydratase family.

Its subcellular location is the cytoplasm. The catalysed reaction is D-erythro-1-(imidazol-4-yl)glycerol 3-phosphate = 3-(imidazol-4-yl)-2-oxopropyl phosphate + H2O. The protein operates within amino-acid biosynthesis; L-histidine biosynthesis; L-histidine from 5-phospho-alpha-D-ribose 1-diphosphate: step 6/9. The sequence is that of Imidazoleglycerol-phosphate dehydratase from Roseiflexus sp. (strain RS-1).